We begin with the raw amino-acid sequence, 874 residues long: Alanine--tRNA ligase (874 aa).

Positions 564, 568, 665, and 669 each coordinate Zn(2+).

It belongs to the class-II aminoacyl-tRNA synthetase family. Requires Zn(2+) as cofactor.

It localises to the cytoplasm. The enzyme catalyses tRNA(Ala) + L-alanine + ATP = L-alanyl-tRNA(Ala) + AMP + diphosphate. Catalyzes the attachment of alanine to tRNA(Ala) in a two-step reaction: alanine is first activated by ATP to form Ala-AMP and then transferred to the acceptor end of tRNA(Ala). Also edits incorrectly charged Ser-tRNA(Ala) and Gly-tRNA(Ala) via its editing domain. The protein is Alanine--tRNA ligase of Burkholderia vietnamiensis (strain G4 / LMG 22486) (Burkholderia cepacia (strain R1808)).